A 934-amino-acid polypeptide reads, in one-letter code: ATP-dependent RNA helicase dbp-10 (934 aa).

The disordered stretch occupies residues 21–43 (LFNNDSDFEDNSSKHHTKKGAVT). Positions 99-127 (GGFQAMGLNAHLLRAITRKGFSVPTPIQR) match the Q motif motif. The Helicase ATP-binding domain maps to 130 to 302 (IPLILERKDV…RAGLQEPSLV (173 aa)). 143–150 (ARTGSGKT) serves as a coordination point for ATP. Residues 250–253 (DEAD) carry the DEAD box motif. 3 disordered regions span residues 343-370 (GPPEGTKEESDELQARKRKREYRPNPKE), 613-722 (ELGP…FQDP), and 851-934 (GAQP…RQKR). Positions 359 to 513 (KRKREYRPNP…KNPSFAADVV (155 aa)) constitute a Helicase C-terminal domain. Acidic residues-rich tracts occupy residues 644 to 654 (DEDDEDVDMED) and 662 to 700 (EETNAFEDFEDEEEEGEAEEAEEAEAKEDPYADDSDSEM). Positions 864 to 926 (EKAPKDADKF…VAEKKREKNA (63 aa)) are enriched in basic and acidic residues.

The protein belongs to the DEAD box helicase family. DDX54/DBP10 subfamily.

It is found in the nucleus. The protein resides in the nucleolus. The enzyme catalyses ATP + H2O = ADP + phosphate + H(+). Functionally, ATP-binding RNA helicase involved in the biogenesis of 60S ribosomal subunits and is required for the normal formation of 25S and 5.8S rRNAs. This Neurospora crassa (strain ATCC 24698 / 74-OR23-1A / CBS 708.71 / DSM 1257 / FGSC 987) protein is ATP-dependent RNA helicase dbp-10 (dbp-10).